The following is a 167-amino-acid chain: 2-C-methyl-D-erythritol 2,4-cyclodiphosphate synthase (167 aa).

The a divalent metal cation site is built by D15 and H17. Residues 15 to 17 (DIH) and 43 to 44 (HS) contribute to the 4-CDP-2-C-methyl-D-erythritol 2-phosphate site. H51 lines the a divalent metal cation pocket. 4-CDP-2-C-methyl-D-erythritol 2-phosphate contacts are provided by residues 65-67 (DIG), 141-144 (TTNE), and R151.

This sequence belongs to the IspF family. As to quaternary structure, homotrimer. Requires a divalent metal cation as cofactor.

The enzyme catalyses 4-CDP-2-C-methyl-D-erythritol 2-phosphate = 2-C-methyl-D-erythritol 2,4-cyclic diphosphate + CMP. It participates in isoprenoid biosynthesis; isopentenyl diphosphate biosynthesis via DXP pathway; isopentenyl diphosphate from 1-deoxy-D-xylulose 5-phosphate: step 4/6. Its function is as follows. Involved in the biosynthesis of isopentenyl diphosphate (IPP) and dimethylallyl diphosphate (DMAPP), two major building blocks of isoprenoid compounds. Catalyzes the conversion of 4-diphosphocytidyl-2-C-methyl-D-erythritol 2-phosphate (CDP-ME2P) to 2-C-methyl-D-erythritol 2,4-cyclodiphosphate (ME-CPP) with a corresponding release of cytidine 5-monophosphate (CMP). This is 2-C-methyl-D-erythritol 2,4-cyclodiphosphate synthase from Prochlorococcus marinus (strain MIT 9312).